Here is a 73-residue protein sequence, read N- to C-terminus: uncharacterized protein (73 aa).

This is an uncharacterized protein from Treponema pallidum (strain Nichols).